Reading from the N-terminus, the 479-residue chain is Sodium-coupled neutral amino acid transporter 5 (479 aa).

Topologically, residues 1–61 (MAISCAVGME…LDFEGKTSFG (61 aa)) are cytoplasmic. A helical transmembrane segment spans residues 62–84 (MSVFNLSNAIMGSGILGLAYAMA). Residues 85-97 (HTGVIFFLALLLC) are Extracellular-facing. Residues 98 to 118 (IALLSSYSIHLLLTCASVVGI) form a helical membrane-spanning segment. The Cytoplasmic portion of the chain corresponds to 119-135 (RAYEQLGQRAFGPAGKV). The helical transmembrane segment at 136–156 (VVAIIICLHNVGAMSSYLFII) threads the bilayer. The Extracellular segment spans residues 157–176 (KSELPLVIGTFLHMDPEGDW). Residues 177-197 (FLKGNLLIILVSLLIILPLAL) traverse the membrane as a helical segment. Over 198–202 (MKHLG) the chain is Cytoplasmic. A helical membrane pass occupies residues 203 to 223 (YLGYTSSLSLTCMLFFLISVI). Residues 224–264 (YKKFQIGCDVSHNDTVVEAEQAPLQAFNSSCEAELFTVDSQ) lie on the Extracellular side of the membrane. A disulfide bridge links cysteine 231 with cysteine 254. Residue asparagine 236 is glycosylated (N-linked (GlcNAc...) asparagine). Residues 265-285 (MSYTVPIMAFAFVCHPEVLPI) traverse the membrane as a helical segment. At 286 to 302 (YTELCRPTQRRMQAVAN) the chain is on the cytoplasmic side. A helical transmembrane segment spans residues 303–323 (MSIGAMFIMYGLTATFGYLTF). The Extracellular segment spans residues 324–341 (YSTVKAEMLEMYTQEDML). A helical membrane pass occupies residues 342-362 (ILCVRLAVLLAVTLTVPVVLF). Residues 363–383 (PIRRALQQLLFPSKAFSWLRH) are Cytoplasmic-facing. A helical transmembrane segment spans residues 384-404 (VAIALILLILVNILVICVPTI). The Extracellular portion of the chain corresponds to 405-406 (RD). The helical transmembrane segment at 407–427 (IFGFIGSTSAPSLIFILPSVF) threads the bilayer. Topologically, residues 428 to 446 (YLRIVPTEVEPLFSWPKIQ) are cytoplasmic. Residues 447–467 (ALCFGVLGVLFMAISLGFMFA) traverse the membrane as a helical segment. Residues 468–479 (NWATGQSRMSGH) lie on the Extracellular side of the membrane.

This sequence belongs to the amino acid/polyamine transporter 2 family. Expressed in the ganglion cell layer and the nerve fiber layer (at protein level). Also expreseed in the cells of the inner nuclear layer and in the inner plexiform layer (at protein level). Expressed in Mueller and ganglion retinal cell.

The protein localises to the cell membrane. It carries out the reaction L-glutamine(out) + Na(+)(out) + H(+)(in) = L-glutamine(in) + Na(+)(in) + H(+)(out). The catalysed reaction is L-serine(out) + Na(+)(out) + H(+)(in) = L-serine(in) + Na(+)(in) + H(+)(out). The enzyme catalyses L-alanine(out) + Na(+)(out) + H(+)(in) = L-alanine(in) + Na(+)(in) + H(+)(out). It catalyses the reaction glycine(out) + Na(+)(out) + H(+)(in) = glycine(in) + Na(+)(in) + H(+)(out). It carries out the reaction L-asparagine(out) + Na(+)(out) + H(+)(in) = L-asparagine(in) + Na(+)(in) + H(+)(out). The catalysed reaction is L-histidine(out) + Na(+)(out) + H(+)(in) = L-histidine(in) + Na(+)(in) + H(+)(out). The enzyme catalyses L-cysteine(out) + Na(+)(out) + H(+)(in) = L-cysteine(in) + Na(+)(in) + H(+)(out). With respect to regulation, not inhibited by lithium. Partial allosteric regulation on ions sodium binding. Functionally, symporter that cotransports neutral amino acids and sodium ions, coupled to an H(+) antiporter activity. Releases L-glutamine and glycine from astroglial cells and may participate in the glutamate/GABA-L-glutamine cycle and the NMDA receptors activation. In addition, contributes significantly to L-glutamine uptake in retina, namely in ganglion and Mueller cells therefore, participates in the retinal glutamate-glutamine cycle. The transport activity is pH sensitive, Li(+) tolerant, bidirectional and associated with large uncoupled fluxes of protons. Moreover functions in both direction and is associated with large uncoupled fluxes of protons. The transport is electroneutral coupled to the cotransport of 1 Na(+) and the antiport of 1 H(+). May have a particular importance for modulation of net hepatic glutamine flux. In Mus musculus (Mouse), this protein is Sodium-coupled neutral amino acid transporter 5.